The sequence spans 349 residues: UPF0324 inner membrane protein YeiH (349 aa).

Over 1-12 the chain is Periplasmic; sequence MTELTLQNHCRT. Residues 13–35 form a helical membrane-spanning segment; that stretch reads MWHFIPGLALSAVITGVALWGGA. At 36 to 38 the chain is on the cytoplasmic side; the sequence is IPA. The chain crosses the membrane as a helical span at residues 39–61; it reads VAGAGFSALTLAILLGMVIGNTI. The Periplasmic segment spans residues 62–99; it reads YPQIWKQCDGGVLFAKQHLLRLGIILYGFRLTFSQIAD. A helical membrane pass occupies residues 100–122; it reads VGISGIVIDVLTLSSTFMLACFL. The Cytoplasmic segment spans residues 123–131; the sequence is GQKVFGLDR. A helical transmembrane segment spans residues 132-151; sequence HTSWLIGAGSSICGAAAVLA. Residues 152 to 162 lie on the Periplasmic side of the membrane; sequence TEPVVKAEASK. The helical transmembrane segment at 163 to 185 threads the bilayer; it reads VTVAVATVVIFGTIAIFLYPAMY. Residues 186–261 lie on the Cytoplasmic side of the membrane; it reads PLLAHWFSPE…SPATGAEKSK (76 aa). A helical membrane pass occupies residues 262 to 284; the sequence is ITIPWFAIFFIVVAIFNSFHLLP. The Periplasmic segment spans residues 285-290; it reads KAVVDM. A helical transmembrane segment spans residues 291 to 313; that stretch reads LVTLDTVLLAMAMAALGLTTHVS. Residues 314–322 are Cytoplasmic-facing; the sequence is ALKKAGAKP. The helical transmembrane segment at 323-345 threads the bilayer; the sequence is LLMALALFAWLIIGGGAINVLIH. Over 346 to 349 the chain is Periplasmic; the sequence is SLIA.

Belongs to the UPF0324 family.

The protein resides in the cell inner membrane. This chain is UPF0324 inner membrane protein YeiH (yeiH), found in Salmonella typhimurium (strain LT2 / SGSC1412 / ATCC 700720).